The following is a 566-amino-acid chain: Putative lipase ATG15 (566 aa).

Residues 1–17 are Cytoplasmic-facing; the sequence is MGSKHKKNASKSLRAFS. The chain crosses the membrane as a helical; Signal-anchor for type II membrane protein span at residues 18-38; sequence FIILSASIALVYIFNPVKLIF. Over 39 to 566 the chain is Lumenal; the sequence is PSSIIRFHHG…CVEWGDEEDA (528 aa). Asparagine 264 and asparagine 348 each carry an N-linked (GlcNAc...) asparagine glycan. Serine 366 (charge relay system) is an active-site residue. Residue asparagine 483 is glycosylated (N-linked (GlcNAc...) asparagine). Positions 507-545 are disordered; that stretch reads DSLDDEPPLPNPLRPGKPSTTSSSQHHTSTTTTTETSRP. Low complexity predominate over residues 522–543; the sequence is GKPSTTSSSQHHTSTTTTTETS.

It belongs to the AB hydrolase superfamily. Lipase family. In terms of assembly, binds to both phosphatidylinositol (PI) and phosphatidylinositol 3,5-bisphosphate (PIP2).

The protein localises to the endosome. Its subcellular location is the multivesicular body membrane. The protein resides in the prevacuolar compartment membrane. It catalyses the reaction a triacylglycerol + H2O = a diacylglycerol + a fatty acid + H(+). Functionally, lipase which is essential for lysis of subvacuolar cytoplasm to vacuole targeted bodies and intravacuolar autophagic bodies. Involved in the lysis of intravacuolar multivesicular body (MVB) vesicles. The intravacuolar membrane disintegration by ATG15 is critical to life span extension. The polypeptide is Putative lipase ATG15 (ATG15) (Meyerozyma guilliermondii (strain ATCC 6260 / CBS 566 / DSM 6381 / JCM 1539 / NBRC 10279 / NRRL Y-324) (Yeast)).